Here is a 170-residue protein sequence, read N- to C-terminus: NADPH-dependent 7-cyano-7-deazaguanine reductase (170 aa).

Residue cysteine 58 is the Thioimide intermediate of the active site. Aspartate 65 serves as the catalytic Proton donor. Substrate contacts are provided by residues 80 to 82 (VES) and 99 to 100 (HE).

The protein belongs to the GTP cyclohydrolase I family. QueF type 1 subfamily.

It localises to the cytoplasm. It carries out the reaction 7-aminomethyl-7-carbaguanine + 2 NADP(+) = 7-cyano-7-deazaguanine + 2 NADPH + 3 H(+). Its pathway is tRNA modification; tRNA-queuosine biosynthesis. Its function is as follows. Catalyzes the NADPH-dependent reduction of 7-cyano-7-deazaguanine (preQ0) to 7-aminomethyl-7-deazaguanine (preQ1). This chain is NADPH-dependent 7-cyano-7-deazaguanine reductase, found in Bdellovibrio bacteriovorus (strain ATCC 15356 / DSM 50701 / NCIMB 9529 / HD100).